Consider the following 348-residue polypeptide: Transmembrane protease serine 12 (348 aa).

Residues 1–20 (MRLGLLSVALLFVGSSHLYS) form the signal peptide. The Extracellular portion of the chain corresponds to 21–324 (DHYSPSGRHR…EHFFHASTQG (304 aa)). Positions 24-46 (SPSGRHRLGPSPEPAASSQQAEA) are disordered. Residues 78-318 (IIGGTEAQAG…YQKWLTEHFF (241 aa)) form the Peptidase S1 domain. A disulfide bridge links Cys107 with Cys123. Residues His122 and Asp171 each act as charge relay system in the active site. Disulfide bonds link Cys206–Cys274, Cys237–Cys253, and Cys264–Cys294. Residues Asn219 and Asn249 are each glycosylated (N-linked (GlcNAc...) asparagine). Ser268 acts as the Charge relay system in catalysis. A helical transmembrane segment spans residues 325 to 345 (ILTINILRGQILIALCFVILL). Over 346–348 (ATT) the chain is Cytoplasmic.

Belongs to the peptidase S1 family. In terms of tissue distribution, in testis, expressed in spermatocytes and spermatids (at protein level).

The protein localises to the cell membrane. It localises to the cytoplasmic vesicle. The protein resides in the secretory vesicle. It is found in the acrosome. In terms of biological role, required for male fertility. Plays a critical role in sperm capacitation and acrosome reactions during fertilization, and also plays a role in the regulation of proteins involved in spermatogenesis. Regulates protein pathways that promote chromosomal synapsis formation, double-strand break repair, formation of the inner mitochondrial membrane cristae and apoptosis in developing sperm. Required for normal sperm motility and binding to the zona pellucida, potentially via a role in ADAM3 protein maturation. This chain is Transmembrane protease serine 12, found in Homo sapiens (Human).